The chain runs to 417 residues: Multifunctional CCA protein (417 aa).

Positions 8 and 11 each coordinate ATP. CTP contacts are provided by glycine 8 and arginine 11. Mg(2+) is bound by residues aspartate 21 and aspartate 23. Positions 91, 143, and 146 each coordinate ATP. CTP is bound by residues arginine 91, arginine 143, and arginine 146. The region spanning 232–333 (TGVHVMMVVD…VRLFERSDAL (102 aa)) is the HD domain.

This sequence belongs to the tRNA nucleotidyltransferase/poly(A) polymerase family. Bacterial CCA-adding enzyme type 1 subfamily. In terms of assembly, monomer. Can also form homodimers and oligomers. It depends on Mg(2+) as a cofactor. The cofactor is Ni(2+).

The enzyme catalyses a tRNA precursor + 2 CTP + ATP = a tRNA with a 3' CCA end + 3 diphosphate. It carries out the reaction a tRNA with a 3' CCA end + 2 CTP + ATP = a tRNA with a 3' CCACCA end + 3 diphosphate. Its function is as follows. Catalyzes the addition and repair of the essential 3'-terminal CCA sequence in tRNAs without using a nucleic acid template. Adds these three nucleotides in the order of C, C, and A to the tRNA nucleotide-73, using CTP and ATP as substrates and producing inorganic pyrophosphate. tRNA 3'-terminal CCA addition is required both for tRNA processing and repair. Also involved in tRNA surveillance by mediating tandem CCA addition to generate a CCACCA at the 3' terminus of unstable tRNAs. While stable tRNAs receive only 3'-terminal CCA, unstable tRNAs are marked with CCACCA and rapidly degraded. This chain is Multifunctional CCA protein, found in Paraburkholderia phymatum (strain DSM 17167 / CIP 108236 / LMG 21445 / STM815) (Burkholderia phymatum).